Here is a 328-residue protein sequence, read N- to C-terminus: UPF0421 protein SERP1427 (328 aa).

A run of 4 helical transmembrane segments spans residues 26-46, 61-81, 109-129, and 132-152; these read LFCMLLNLTPIFAILTAIVTI, LPATVIGALFAVVFTYVFGDQ, AVLTSVAMIPGIHEAYVFNFF, and LLTALIGLVTAGLVNFIILPP.

The protein belongs to the UPF0421 family.

It is found in the cell membrane. The polypeptide is UPF0421 protein SERP1427 (Staphylococcus epidermidis (strain ATCC 35984 / DSM 28319 / BCRC 17069 / CCUG 31568 / BM 3577 / RP62A)).